Consider the following 182-residue polypeptide: uncharacterized protein (182 aa).

A run of 2 helical transmembrane segments spans residues Ile-29 to Pro-49 and Phe-63 to Leu-83.

Its subcellular location is the cell membrane. This is an uncharacterized protein from Ureaplasma parvum serovar 3 (strain ATCC 700970).